The sequence spans 82 residues: Large ribosomal subunit protein uL23 (82 aa).

It belongs to the universal ribosomal protein uL23 family. As to quaternary structure, part of the 50S ribosomal subunit. Contacts protein L29.

Binds to 23S rRNA. One of the proteins that surrounds the polypeptide exit tunnel on the outside of the ribosome. The polypeptide is Large ribosomal subunit protein uL23 (Methanospirillum hungatei JF-1 (strain ATCC 27890 / DSM 864 / NBRC 100397 / JF-1)).